The sequence spans 95 residues: DNA-directed RNA polymerase subunit Rpo11 (95 aa).

Belongs to the archaeal Rpo11/eukaryotic RPB11/RPC19 RNA polymerase subunit family. As to quaternary structure, part of the RNA polymerase complex.

The protein resides in the cytoplasm. The catalysed reaction is RNA(n) + a ribonucleoside 5'-triphosphate = RNA(n+1) + diphosphate. Functionally, DNA-dependent RNA polymerase (RNAP) catalyzes the transcription of DNA into RNA using the four ribonucleoside triphosphates as substrates. The polypeptide is DNA-directed RNA polymerase subunit Rpo11 (Methanococcus vannielii (strain ATCC 35089 / DSM 1224 / JCM 13029 / OCM 148 / SB)).